A 100-amino-acid chain; its full sequence is Aspartyl/glutamyl-tRNA(Asn/Gln) amidotransferase subunit C (100 aa).

It belongs to the GatC family. In terms of assembly, heterotrimer of A, B and C subunits.

The catalysed reaction is L-glutamyl-tRNA(Gln) + L-glutamine + ATP + H2O = L-glutaminyl-tRNA(Gln) + L-glutamate + ADP + phosphate + H(+). It carries out the reaction L-aspartyl-tRNA(Asn) + L-glutamine + ATP + H2O = L-asparaginyl-tRNA(Asn) + L-glutamate + ADP + phosphate + 2 H(+). Functionally, allows the formation of correctly charged Asn-tRNA(Asn) or Gln-tRNA(Gln) through the transamidation of misacylated Asp-tRNA(Asn) or Glu-tRNA(Gln) in organisms which lack either or both of asparaginyl-tRNA or glutaminyl-tRNA synthetases. The reaction takes place in the presence of glutamine and ATP through an activated phospho-Asp-tRNA(Asn) or phospho-Glu-tRNA(Gln). The protein is Aspartyl/glutamyl-tRNA(Asn/Gln) amidotransferase subunit C of Streptococcus equi subsp. equi (strain 4047).